A 1262-amino-acid polypeptide reads, in one-letter code: Cytoplasmic FMR1-interacting protein homolog (1262 aa).

The tract at residues 519-550 (LNRMTDVKGKKKSSAPKGDSANSSSSDIRIPR) is disordered.

The protein belongs to the CYFIP family. As to quaternary structure, interacts with gex-3.

Its subcellular location is the cytoplasm. Its function is as follows. Required for initial steps of body morphogenesis. May play a role in egg laying and yolk protein clatherin-mediated endocytosis by oocytes during oogenesis. Plays a role in the formation of muscle connections, also called muscle arm extensions, between the body wall and the motor axons in the dorsal and ventral cord. The polypeptide is Cytoplasmic FMR1-interacting protein homolog (Caenorhabditis elegans).